We begin with the raw amino-acid sequence, 238 residues long: 1-(5-phosphoribosyl)-5-[(5-phosphoribosylamino)methylideneamino] imidazole-4-carboxamide isomerase (238 aa).

Residue aspartate 8 is the Proton acceptor of the active site. Residue aspartate 129 is the Proton donor of the active site.

Belongs to the HisA/HisF family.

Its subcellular location is the cytoplasm. The catalysed reaction is 1-(5-phospho-beta-D-ribosyl)-5-[(5-phospho-beta-D-ribosylamino)methylideneamino]imidazole-4-carboxamide = 5-[(5-phospho-1-deoxy-D-ribulos-1-ylimino)methylamino]-1-(5-phospho-beta-D-ribosyl)imidazole-4-carboxamide. It functions in the pathway amino-acid biosynthesis; L-histidine biosynthesis; L-histidine from 5-phospho-alpha-D-ribose 1-diphosphate: step 4/9. In Brachyspira hyodysenteriae (strain ATCC 49526 / WA1), this protein is 1-(5-phosphoribosyl)-5-[(5-phosphoribosylamino)methylideneamino] imidazole-4-carboxamide isomerase.